A 359-amino-acid polypeptide reads, in one-letter code: Peptide chain release factor 1 (359 aa).

An N5-methylglutamine modification is found at Gln-236.

The protein belongs to the prokaryotic/mitochondrial release factor family. In terms of processing, methylated by PrmC. Methylation increases the termination efficiency of RF1.

It is found in the cytoplasm. Peptide chain release factor 1 directs the termination of translation in response to the peptide chain termination codons UAG and UAA. The chain is Peptide chain release factor 1 from Lacticaseibacillus casei (strain BL23) (Lactobacillus casei).